The sequence spans 560 residues: Trafficking protein particle complex II-specific subunit 65 (560 aa).

The tract at residues 164–193 (SSKNTNNHLEKNNRATHRVSSKNSEVHEAD) is disordered. Residues Ser393 and Ser398 each carry the phosphoserine modification.

In terms of assembly, part of the multisubunit TRAPP (transport protein particle) II complex composed of BET3, BET5, TRS20, TRS23, TRS31, TRS33, TRS65, TRS120 and TRS130. Interacts directly with TRS120 and TRS130.

It is found in the cytoplasm. Its subcellular location is the golgi apparatus. The protein resides in the cis-Golgi network. The protein operates within glycan metabolism; beta-glucan biosynthesis. Functionally, specific subunit of the TRAPP II complex, a highly conserved vesicle tethering complex that functions in the late Golgi as a guanine nucleotide exchanger (GEF) for the Golgi YPT1 GTPase. TRS65 plays a role in the YPT GEF activity of TRAPP II in concert with the two other TRAPP II-specific subunits TRS120 and TRS130. Involved in cell wall (1--&gt;6)-beta-glucan synthesis. The chain is Trafficking protein particle complex II-specific subunit 65 (TRS65) from Saccharomyces cerevisiae (strain ATCC 204508 / S288c) (Baker's yeast).